The primary structure comprises 273 residues: Large ribosomal subunit protein uL2c (273 aa).

Disordered stretches follow at residues 30–55 (EKKLTRGWSRAQGRNNKGRITTRHRG) and 222–243 (GSAMNPVDHPHGGGEGKAPIGR). The span at 45-55 (NKGRITTRHRG) shows a compositional bias: basic residues.

The protein belongs to the universal ribosomal protein uL2 family. In terms of assembly, part of the 50S ribosomal subunit.

The protein localises to the plastid. This Prototheca wickerhamii protein is Large ribosomal subunit protein uL2c (rpl2).